The primary structure comprises 330 residues: Aspartate--ammonia ligase (330 aa).

This sequence belongs to the class-II aminoacyl-tRNA synthetase family. AsnA subfamily.

The protein resides in the cytoplasm. The catalysed reaction is L-aspartate + NH4(+) + ATP = L-asparagine + AMP + diphosphate + H(+). The protein operates within amino-acid biosynthesis; L-asparagine biosynthesis; L-asparagine from L-aspartate (ammonia route): step 1/1. The chain is Aspartate--ammonia ligase from Streptococcus pyogenes serotype M2 (strain MGAS10270).